The chain runs to 588 residues: Dual specificity tyrosine-phosphorylation-regulated kinase 3 (588 aa).

Residues 1 to 188 (MGGTARGPGR…HGVIGGPNNG (188 aa)) are disordered. Over residues 97-134 (SNTIQSDGISDSEKCSPTVSQGKSSDCLNTVKSNSSSK) the composition is skewed to polar residues. One can recognise a Protein kinase domain in the interval 209–522 (YEVLKIIGKG…PAQALRHPWI (314 aa)). ATP-binding positions include 215 to 223 (IGKGSFGQV), Lys238, and 288 to 291 (FELL). Asp335 acts as the Proton acceptor in catalysis. Ser350 is modified (phosphoserine). Tyr369 carries the post-translational modification Phosphotyrosine. A Nuclear localization signal motif is present at residues 468 to 481 (RSRRGKKRGPPGSK).

This sequence belongs to the protein kinase superfamily. CMGC Ser/Thr protein kinase family. MNB/DYRK subfamily. As to quaternary structure, interacts with SIRT1. It depends on Mg(2+) as a cofactor. In terms of processing, ubiquitinated at anaphase by the anaphase-promoting complex (APC/C), leading to its degradation by the proteasome. Protein kinase activity is activated following autophosphorylation at Tyr-369. Autophosphorylation at Ser-350 stabilizes the protein and enhances the protein kinase activity. As to expression, isoform 1: Highly expressed in testis and in hematopoietic tissue such as fetal liver, and bone marrow. Isoform 1: Predominant form in fetal liver and bone marrow. Isoform 1: Present at low levels in heart, pancreas, lymph node and thymus. Isoform 2: Highly expressed in testis and in hematopoietic tissue such as fetal liver, and bone marrow. Isoform 2: Predominant form in testis. Isoform 2: Present at low levels in heart, pancreas, lymph node and thymus.

It is found in the nucleus. Its subcellular location is the cytoplasm. The protein resides in the nucleus speckle. The protein localises to the cytoplasmic granule. It localises to the cytoskeleton. It is found in the microtubule organizing center. Its subcellular location is the centrosome. It carries out the reaction L-seryl-[protein] + ATP = O-phospho-L-seryl-[protein] + ADP + H(+). The enzyme catalyses L-threonyl-[protein] + ATP = O-phospho-L-threonyl-[protein] + ADP + H(+). It catalyses the reaction L-tyrosyl-[protein] + ATP = O-phospho-L-tyrosyl-[protein] + ADP + H(+). Protein kinase activity is activated following autophosphorylation at Tyr-369. Inhibited by harmine, an ATP competitive inhibitor. Inhibited by small-compound GSK-626616. Its function is as follows. Dual-specificity protein kinase that promotes disassembly of several types of membraneless organelles during mitosis, such as stress granules, nuclear speckles and pericentriolar material. Dual-specificity tyrosine-regulated kinases (DYRKs) autophosphorylate a critical tyrosine residue in their activation loop and phosphorylate their substrate on serine and threonine residues. Acts as a central dissolvase of membraneless organelles during the G2-to-M transition, after the nuclear-envelope breakdown: acts by mediating phosphorylation of multiple serine and threonine residues in unstructured domains of proteins, such as SRRM1 and PCM1. Does not mediate disassembly of all membraneless organelles: disassembly of P-body and nucleolus is not regulated by DYRK3. Dissolution of membraneless organelles at the onset of mitosis is also required to release mitotic regulators, such as ZNF207, from liquid-unmixed organelles where they are sequestered and keep them dissolved during mitosis. Regulates mTORC1 by mediating the dissolution of stress granules: during stressful conditions, DYRK3 partitions from the cytosol to the stress granule, together with mTORC1 components, which prevents mTORC1 signaling. When stress signals are gone, the kinase activity of DYRK3 is required for the dissolution of stress granule and mTORC1 relocation to the cytosol: acts by mediating the phosphorylation of the mTORC1 inhibitor AKT1S1, allowing full reactivation of mTORC1 signaling. Also acts as a negative regulator of EPO-dependent erythropoiesis: may place an upper limit on red cell production during stress erythropoiesis. Inhibits cell death due to cytokine withdrawal in hematopoietic progenitor cells. Promotes cell survival upon genotoxic stress through phosphorylation of SIRT1: this in turn inhibits p53/TP53 activity and apoptosis. In Homo sapiens (Human), this protein is Dual specificity tyrosine-phosphorylation-regulated kinase 3.